The following is a 150-amino-acid chain: Anti-sigma F factor (150 aa).

The protein belongs to the anti-sigma-factor family.

It catalyses the reaction L-seryl-[protein] + ATP = O-phospho-L-seryl-[protein] + ADP + H(+). It carries out the reaction L-threonyl-[protein] + ATP = O-phospho-L-threonyl-[protein] + ADP + H(+). Its function is as follows. Binds to sigma F and blocks its ability to form an RNA polymerase holoenzyme (E-sigma F). Phosphorylates SpoIIAA on a serine residue. This phosphorylation may enable SpoIIAA to act as an anti-anti-sigma factor that counteracts SpoIIAB and thus releases sigma F from inhibition. The sequence is that of Anti-sigma F factor from Pasteuria penetrans.